The chain runs to 616 residues: Bifunctional 2-aminoethylphosphonate cytidylyltransferase/aminotransferase (616 aa).

Positions 1 to 240 (MIKQAVILAG…VKNIYPHIVE (240 aa)) are 2-aminoethylphosphonate cytidylyltransferase. The CMP-(2-aminoethyl)phosphonate site is built by Leu8, Gly10, Gly11, Lys25, Thr83, Thr88, Glu104, and Ser105. Residues Asp106 and Asp136 each coordinate Mg(2+). The CMP-(2-aminoethyl)phosphonate site is built by Asp136, Lys153, and Glu196. Residues Glu220 and Asp222 each contribute to the Mg(2+) site. The tract at residues 250 to 616 (EVLLNPGPAT…EYMNGIGVGV (367 aa)) is 2-aminoethylphosphonate aminotransferase. Residues Ser313, Gly314, Thr315, Thr390, Lys441, and Thr490 each coordinate pyridoxal 5'-phosphate.

This sequence in the N-terminal section; belongs to the LicC/PntC cytidylyltransferase family. The protein in the C-terminal section; belongs to the class-V pyridoxal-phosphate-dependent aminotransferase family. PhnW subfamily. As to quaternary structure, homodimer. Mg(2+) serves as cofactor. Requires Zn(2+) as cofactor. It depends on pyridoxal 5'-phosphate as a cofactor.

It carries out the reaction (2-aminoethyl)phosphonate + CTP = CMP-(2-aminoethyl)phosphonate + diphosphate. The catalysed reaction is (2-aminoethyl)phosphonate + pyruvate = phosphonoacetaldehyde + L-alanine. The protein operates within phosphorus metabolism; phosphonate biosynthesis. With respect to regulation, cytidylyltransferase activity is inhibited in the presence of EDTA and is restored by the addition of Mg(2+) or Zn(2+). Bifunctional transferase involved in the biosynthesis of cell-surface phosphonates. The aminotransferase region catalyzes the transformation of phosphonoacetaldehyde (PnAA) to 2-aminoethylphosphonate (AEP). The cytidylyltransferase region catalyzes the activation of 2-aminoethylphosphonate (AEP) to CMP-2-aminoethylphosphonate (CMP-AEP). Cannot use phosphocholine. Exhibits strong activity towards CTP, limited activity towards ATP and no activity with GTP. This chain is Bifunctional 2-aminoethylphosphonate cytidylyltransferase/aminotransferase, found in Treponema denticola (strain ATCC 35405 / DSM 14222 / CIP 103919 / JCM 8153 / KCTC 15104).